The primary structure comprises 385 residues: MSGLRAASVFSPVFKRMASSIPSQFKSIIYNSHSLEDCTGVLSVHNYKPKQDLNKSVVLRTLAFPINPSDINQLQGVYPSLPEKTLDYSTEKPSAIAGNEGLFEVVSLPEHGDHGELKVGDWVIPVQANQGTWSNYRVFDKASDLIKVNGLDLYSAATVSVNGCTAYQLVNNYVDWNADGNEWLIQNAGTSGVSKFVTQIAKARGVKTLSVIRDRDNFEEVAEVLEQKFGATKVISESQNNDKDFGKKELPKVLGDKARVRLALNSVGGKSSSAIARKLERDALMLTYGGMSKQPVTIPTSLHIFKGLTSKGYWVTENNKRDPTDKVNTIKGFIDLYKQGKIISPEEEIETMEWDANNGDDQQLLELVKRGITEKGKKKMVLLKW.

Catalysis depends on tyrosine 78, which acts as the Proton donor. NADP(+)-binding positions include asparagine 162, 190 to 193 (TSGV), 213 to 215 (RDR), 288 to 291 (YGGM), 313 to 315 (YWV), and lysine 378.

It belongs to the zinc-containing alcohol dehydrogenase family. Quinone oxidoreductase subfamily. As to quaternary structure, homodimer.

The protein localises to the mitochondrion matrix. It carries out the reaction a 2,3-saturated acyl-[ACP] + NADP(+) = a (2E)-enoyl-[ACP] + NADPH + H(+). In terms of biological role, catalyzes the NADPH-dependent reduction of trans-2-enoyl thioesters in mitochondrial fatty acid synthesis (fatty acid synthesis type II). Fatty acid chain elongation in mitochondria uses acyl carrier protein (ACP) as an acyl group carrier, but the enzyme accepts both ACP and CoA thioesters as substrates in vitro. Required for respiration and the maintenance of the mitochondrial compartment. The polypeptide is Enoyl-[acyl-carrier-protein] reductase, mitochondrial (ETR1) (Candida glabrata (strain ATCC 2001 / BCRC 20586 / JCM 3761 / NBRC 0622 / NRRL Y-65 / CBS 138) (Yeast)).